The primary structure comprises 338 residues: Aspartate carbamoyltransferase catalytic subunit (338 aa).

Residues arginine 72 and threonine 73 each coordinate carbamoyl phosphate. Lysine 100 provides a ligand contact to L-aspartate. Carbamoyl phosphate is bound by residues arginine 122, histidine 152, and glutamine 155. Arginine 186 and arginine 243 together coordinate L-aspartate. The carbamoyl phosphate site is built by glycine 284 and proline 285.

The protein belongs to the aspartate/ornithine carbamoyltransferase superfamily. ATCase family. As to quaternary structure, heterododecamer (2C3:3R2) of six catalytic PyrB chains organized as two trimers (C3), and six regulatory PyrI chains organized as three dimers (R2).

The enzyme catalyses carbamoyl phosphate + L-aspartate = N-carbamoyl-L-aspartate + phosphate + H(+). The protein operates within pyrimidine metabolism; UMP biosynthesis via de novo pathway; (S)-dihydroorotate from bicarbonate: step 2/3. Functionally, catalyzes the condensation of carbamoyl phosphate and aspartate to form carbamoyl aspartate and inorganic phosphate, the committed step in the de novo pyrimidine nucleotide biosynthesis pathway. This is Aspartate carbamoyltransferase catalytic subunit from Acinetobacter baylyi (strain ATCC 33305 / BD413 / ADP1).